The chain runs to 183 residues: Ran guanine nucleotide release factor (183 aa).

An interaction with RAN region spans residues 23 to 66 (ELRQIPDNQEVFAHSQTDQSIIIELLEYQSQVQDADAARYHFED).

The protein belongs to the MOG1 family. Monomer. Interacts with ran.

Its subcellular location is the nucleus. The protein resides in the cytoplasm. The protein localises to the perinuclear region. It is found in the cell membrane. Its function is as follows. May regulate the intracellular trafficking of RAN. Promotes guanine nucleotide release from RAN and inhibits binding of new GTP. Plays a role in the regulation of the levels of GTP-bound RAN in the nucleus. Required for normal expression of the ion channel hcn4 and for normal expression of the cardiac transcription factors nkx2.5, gata4 and hand2 during embryonic development. Required for normal embryonic heart development and normal heart rate. The protein is Ran guanine nucleotide release factor of Danio rerio (Zebrafish).